Reading from the N-terminus, the 197-residue chain is Probable nicotinate-nucleotide adenylyltransferase (197 aa).

It belongs to the NadD family.

The catalysed reaction is nicotinate beta-D-ribonucleotide + ATP + H(+) = deamido-NAD(+) + diphosphate. Its pathway is cofactor biosynthesis; NAD(+) biosynthesis; deamido-NAD(+) from nicotinate D-ribonucleotide: step 1/1. Catalyzes the reversible adenylation of nicotinate mononucleotide (NaMN) to nicotinic acid adenine dinucleotide (NaAD). This is Probable nicotinate-nucleotide adenylyltransferase from Pseudothermotoga lettingae (strain ATCC BAA-301 / DSM 14385 / NBRC 107922 / TMO) (Thermotoga lettingae).